The following is a 201-amino-acid chain: NADH-quinone oxidoreductase subunit C (201 aa).

Belongs to the complex I 30 kDa subunit family. As to quaternary structure, NDH-1 is composed of 14 different subunits. Subunits NuoB, C, D, E, F, and G constitute the peripheral sector of the complex.

Its subcellular location is the cell inner membrane. It catalyses the reaction a quinone + NADH + 5 H(+)(in) = a quinol + NAD(+) + 4 H(+)(out). Functionally, NDH-1 shuttles electrons from NADH, via FMN and iron-sulfur (Fe-S) centers, to quinones in the respiratory chain. The immediate electron acceptor for the enzyme in this species is believed to be ubiquinone. Couples the redox reaction to proton translocation (for every two electrons transferred, four hydrogen ions are translocated across the cytoplasmic membrane), and thus conserves the redox energy in a proton gradient. In Dechloromonas aromatica (strain RCB), this protein is NADH-quinone oxidoreductase subunit C.